The following is a 247-amino-acid chain: 14-3-3 protein gamma-1 (247 aa).

The protein belongs to the 14-3-3 family. Homodimer, and heterodimer with other family members.

It is found in the cytoplasm. Its function is as follows. Adapter protein implicated in the regulation of a large spectrum of both general and specialized signaling pathways. Binds to a large number of partners, usually by recognition of a phosphoserine or phosphothreonine motif. Binding generally results in the modulation of the activity of the binding partner. This is 14-3-3 protein gamma-1 (ywhag1) from Danio rerio (Zebrafish).